Consider the following 319-residue polypeptide: D-alanine--D-alanine ligase (319 aa).

The disordered stretch occupies residues 1–23; it reads MTGPEWAHTRGTKVGQSSRTPPK. Residues 120-313 enclose the ATP-grasp domain; the sequence is KDAFVAAGLP…FGKLCAWMVE (194 aa). 147-197 contacts ATP; it reads MQPPYVVKPNNEGSSVGVYLVHEAANGPPQLSEDMPQEVMVEAFAPGRELT. Mg(2+)-binding residues include aspartate 264, glutamate 280, and asparagine 282.

Belongs to the D-alanine--D-alanine ligase family. Mg(2+) serves as cofactor. It depends on Mn(2+) as a cofactor.

Its subcellular location is the cytoplasm. The catalysed reaction is 2 D-alanine + ATP = D-alanyl-D-alanine + ADP + phosphate + H(+). The protein operates within cell wall biogenesis; peptidoglycan biosynthesis. Functionally, cell wall formation. The sequence is that of D-alanine--D-alanine ligase from Roseobacter denitrificans (strain ATCC 33942 / OCh 114) (Erythrobacter sp. (strain OCh 114)).